The primary structure comprises 359 residues: Methyltransferase fsa4 (359 aa).

Residues 198–199 (GG), aspartate 224, 248–249 (SF), arginine 264, and arginine 265 each bind S-adenosyl-L-methionine.

This sequence belongs to the class I-like SAM-binding methyltransferase superfamily. Cation-independent O-methyltransferase family.

It functions in the pathway mycotoxin biosynthesis. Functionally, methyltransferase; part of the gene cluster that mediates the biosynthesis of HIV-1 integrase inhibitor equisetin and of fusarisetin A, both trans-fused decalin-containing tetramic acids showing also antimicrobial activity. The PKS module of fsa1 together with the enoylreductase fsa3 catalyze the formation of the polyketide unit which is then conjugated to L-serine by the condensation domain of the fsa1 NRPS module. Activity of the Dieckmann cyclase domain (RED) results in release of the Dieckmann product intermediate. Diels-Alderase fsa2 is involved in endo-selective Diels-Alder cycloaddition to form the decalin ring, leading to the production of N-desmethylequisetin also called trichosetin. Subsequent N-methylation is carried out by fsa4 to give equisetin. The enzymatic gene responsible for the conversion of equisetin to fusarisetin A has not been identified yet and is probably located outside of the fsa cluster. The chain is Methyltransferase fsa4 from Fusarium sp. (strain FN080326).